We begin with the raw amino-acid sequence, 849 residues long: Glycogen phosphorylase (849 aa).

Residue Lys679 is modified to N6-(pyridoxal phosphate)lysine.

This sequence belongs to the glycogen phosphorylase family. It depends on pyridoxal 5'-phosphate as a cofactor.

The catalysed reaction is [(1-&gt;4)-alpha-D-glucosyl](n) + phosphate = [(1-&gt;4)-alpha-D-glucosyl](n-1) + alpha-D-glucose 1-phosphate. In terms of biological role, phosphorylase is an important allosteric enzyme in carbohydrate metabolism. Enzymes from different sources differ in their regulatory mechanisms and in their natural substrates. However, all known phosphorylases share catalytic and structural properties. The polypeptide is Glycogen phosphorylase (glgP) (Synechocystis sp. (strain ATCC 27184 / PCC 6803 / Kazusa)).